Reading from the N-terminus, the 310-residue chain is Glutaminase 1 (310 aa).

The substrate site is built by serine 66, asparagine 117, glutamate 161, asparagine 168, tyrosine 192, tyrosine 244, and valine 262. Lysine 294 is modified (N6-acetyllysine).

It belongs to the glutaminase family. As to quaternary structure, homotetramer.

It catalyses the reaction L-glutamine + H2O = L-glutamate + NH4(+). This is Glutaminase 1 from Escherichia coli O157:H7.